A 448-amino-acid chain; its full sequence is Divalent metal cation transporter MntH (448 aa).

The next 11 membrane-spanning stretches (helical) occupy residues 41–61, 69–89, 117–137, 147–167, 176–196, 215–235, 270–290, 307–327, 363–383, 384–404, and 424–444; these read LFAF…PGNW, SEFG…AVLL, GFVL…AEVI, FGIP…LVLF, IEVI…AEMV, IVTN…TVMP, FSLT…AAAF, LLNP…ALLA, VLAI…GINE, LLIF…IPLV, and IISW…LFYT.

It belongs to the NRAMP family.

It is found in the cell membrane. In terms of biological role, h(+)-stimulated, divalent metal cation uptake system. In Listeria welshimeri serovar 6b (strain ATCC 35897 / DSM 20650 / CCUG 15529 / CIP 8149 / NCTC 11857 / SLCC 5334 / V8), this protein is Divalent metal cation transporter MntH.